A 183-amino-acid polypeptide reads, in one-letter code: Small ribosomal subunit protein uS4c (183 aa).

An S4 RNA-binding domain is found at 82–143 (MRLDNILFRL…KQRSKALIQN (62 aa)).

This sequence belongs to the universal ribosomal protein uS4 family. In terms of assembly, part of the 30S ribosomal subunit. Contacts protein S5. The interaction surface between S4 and S5 is involved in control of translational fidelity.

It is found in the plastid. Its subcellular location is the chloroplast. Functionally, one of the primary rRNA binding proteins, it binds directly to 16S rRNA where it nucleates assembly of the body of the 30S subunit. In terms of biological role, with S5 and S12 plays an important role in translational accuracy. This Crocosmia sp. (strain Porto Alegre 034) protein is Small ribosomal subunit protein uS4c (rps4).